Consider the following 118-residue polypeptide: Small ribosomal subunit protein uS13 (118 aa).

The interval 94-118 is disordered; sequence GLPVRGQRTRTNARTRKGPRKAIKK.

It belongs to the universal ribosomal protein uS13 family. Part of the 30S ribosomal subunit. Forms a loose heterodimer with protein S19. Forms two bridges to the 50S subunit in the 70S ribosome.

Functionally, located at the top of the head of the 30S subunit, it contacts several helices of the 16S rRNA. In the 70S ribosome it contacts the 23S rRNA (bridge B1a) and protein L5 of the 50S subunit (bridge B1b), connecting the 2 subunits; these bridges are implicated in subunit movement. Contacts the tRNAs in the A and P-sites. The polypeptide is Small ribosomal subunit protein uS13 (Thiobacillus denitrificans (strain ATCC 25259 / T1)).